A 133-amino-acid chain; its full sequence is Small ribosomal subunit protein bS16 (133 aa).

A disordered region spans residues 99 to 133 (EKWQQNQTERRQKRLAVKTRRRQAKKAAEAKGAEA). Over residues 109 to 123 (RQKRLAVKTRRRQAK) the composition is skewed to basic residues. Positions 124–133 (KAAEAKGAEA) are enriched in basic and acidic residues.

It belongs to the bacterial ribosomal protein bS16 family.

The chain is Small ribosomal subunit protein bS16 from Chlorobium limicola (strain DSM 245 / NBRC 103803 / 6330).